Consider the following 136-residue polypeptide: Large ribosomal subunit protein uL16c (136 aa).

Residues 1-20 (MLSPKRTKFRKQHRGRMKGK) are disordered.

The protein belongs to the universal ribosomal protein uL16 family. As to quaternary structure, part of the 50S ribosomal subunit.

It localises to the plastid. The protein localises to the chloroplast. This is Large ribosomal subunit protein uL16c from Brachypodium distachyon (Purple false brome).